The primary structure comprises 500 residues: Type-2 serine--tRNA ligase (500 aa).

Ala-305 contacts L-serine. Cys-307 contacts Zn(2+). Arg-337 is a binding site for L-serine. ATP is bound by residues 337-339 and 348-349; these read RYE and RV. L-serine-binding positions include 354–356 and Gln-401; that span reads RIE. Glu-356 is a Zn(2+) binding site. Position 430 (Glu-430) interacts with ATP. Asn-433 serves as a coordination point for L-serine. Cys-459 is a Zn(2+) binding site. ATP is bound at residue Arg-466.

Belongs to the class-II aminoacyl-tRNA synthetase family. Type-2 seryl-tRNA synthetase subfamily. In terms of assembly, homodimer. The cofactor is Zn(2+).

Its subcellular location is the cytoplasm. The catalysed reaction is tRNA(Ser) + L-serine + ATP = L-seryl-tRNA(Ser) + AMP + diphosphate + H(+). It catalyses the reaction tRNA(Sec) + L-serine + ATP = L-seryl-tRNA(Sec) + AMP + diphosphate + H(+). It functions in the pathway aminoacyl-tRNA biosynthesis; selenocysteinyl-tRNA(Sec) biosynthesis; L-seryl-tRNA(Sec) from L-serine and tRNA(Sec): step 1/1. Functionally, catalyzes the attachment of serine to tRNA(Ser). Is also able to aminoacylate tRNA(Sec) with serine, to form the misacylated tRNA L-seryl-tRNA(Sec), which will be further converted into selenocysteinyl-tRNA(Sec). The protein is Type-2 serine--tRNA ligase of Methanothrix thermoacetophila (strain DSM 6194 / JCM 14653 / NBRC 101360 / PT) (Methanosaeta thermophila).